We begin with the raw amino-acid sequence, 407 residues long: Substance-P receptor (407 aa).

A disordered region spans residues 1–20 (MDNVLPVDSDLFPNTSTNTS). At 1–31 (MDNVLPVDSDLFPNTSTNTSESNQFVQPTWQ) the chain is on the extracellular side. N14 and N18 each carry an N-linked (GlcNAc...) asparagine glycan. The chain crosses the membrane as a helical span at residues 32 to 54 (IVLWAAAYTVIVVTSVVGNVVVI). The Cytoplasmic segment spans residues 55 to 64 (WIILAHKRMR). The chain crosses the membrane as a helical span at residues 65-86 (TVTNYFLVNLAFAEACMAAFNT). Residues 87 to 106 (VVNFTYAVHNVWYYGLFYCK) are Extracellular-facing. C105 and C180 are oxidised to a cystine. Residues 107 to 128 (FHNFFPIAALFASIYSMTAVAF) form a helical membrane-spanning segment. At 129–148 (DRYMAIIHPLQPRLSATATK) the chain is on the cytoplasmic side. The chain crosses the membrane as a helical span at residues 149 to 169 (VVIFVIWVLALLLAFPQGYYS). Over 170–194 (TTETMPSRVVCMIEWPEHPNRTYEK) the chain is Extracellular. The helical transmembrane segment at 195-219 (AYHICVTVLIYFLPLLVIGYAYTVV) threads the bilayer. Over 220–248 (GITLWASEIPGDSSDRYHEQVSAKRKVVK) the chain is Cytoplasmic. Residues 249–270 (MMIVVVCTFAICWLPFHIFFLL) form a helical membrane-spanning segment. At 271 to 283 (PYINPDLYLKKFI) the chain is on the extracellular side. The helical transmembrane segment at 284-308 (QQVYLASMWLAMSSTMYNPIIYCCL) threads the bilayer. Residues 309 to 407 (NDRFRLGFKH…SSSFYSNMLA (99 aa)) are Cytoplasmic-facing. C322 is lipidated: S-palmitoyl cysteine. Residues 362–407 (VGAHEDEPEEGPKATPSSLDLTSNGSSRSNSKTMTESSSFYSNMLA) are disordered. Positions 376 to 407 (TPSSLDLTSNGSSRSNSKTMTESSSFYSNMLA) are enriched in polar residues.

The protein belongs to the G-protein coupled receptor 1 family. In terms of assembly, interacts with ARRB1.

It is found in the cell membrane. In terms of biological role, this is a receptor for the tachykinin neuropeptide substance P. It is probably associated with G proteins that activate a phosphatidylinositol-calcium second messenger system. The rank order of affinity of this receptor to tachykinins is: substance P &gt; substance K &gt; neuromedin K. The polypeptide is Substance-P receptor (Tacr1) (Mus musculus (Mouse)).